Here is a 219-residue protein sequence, read N- to C-terminus: 2-hydroxy-3-keto-5-methylthiopentenyl-1-phosphate phosphatase (219 aa).

This sequence belongs to the HAD-like hydrolase superfamily. MtnX family.

It carries out the reaction 2-hydroxy-5-methylsulfanyl-3-oxopent-1-enyl phosphate + H2O = 1,2-dihydroxy-5-(methylsulfanyl)pent-1-en-3-one + phosphate. It functions in the pathway amino-acid biosynthesis; L-methionine biosynthesis via salvage pathway; L-methionine from S-methyl-5-thio-alpha-D-ribose 1-phosphate: step 4/6. Its function is as follows. Dephosphorylates 2-hydroxy-3-keto-5-methylthiopentenyl-1-phosphate (HK-MTPenyl-1-P) yielding 1,2-dihydroxy-3-keto-5-methylthiopentene (DHK-MTPene). The chain is 2-hydroxy-3-keto-5-methylthiopentenyl-1-phosphate phosphatase from Bacillus cereus (strain AH187).